The chain runs to 94 residues: PqqA binding protein (94 aa).

This sequence belongs to the PqqD family. As to quaternary structure, monomer. Interacts with PqqE.

Its pathway is cofactor biosynthesis; pyrroloquinoline quinone biosynthesis. Functions as a PqqA binding protein and presents PqqA to PqqE, in the pyrroloquinoline quinone (PQQ) biosynthetic pathway. This chain is PqqA binding protein, found in Acinetobacter baumannii (strain SDF).